A 399-amino-acid chain; its full sequence is Probable peptidoglycan glycosyltransferase FtsW (399 aa).

The Cytoplasmic portion of the chain corresponds to 1 to 25; that stretch reads MTAAAPSKPLPRTPRVRQAYPLDYP. The helical transmembrane segment at 26 to 46 threads the bilayer; that stretch reads LLLCALGLLAFGWVMVTSASM. The Periplasmic portion of the chain corresponds to 47–64; the sequence is SIAEACCQNPFHYSIRHA. Residues 65–85 traverse the membrane as a helical segment; the sequence is IALGLALMLGLMAYSVPSHWW. The Cytoplasmic segment spans residues 86–88; it reads ERH. A helical membrane pass occupies residues 89–109; the sequence is GVWLFLASALVLILVLIPGIG. At 110 to 117 the chain is on the periplasmic side; sequence RTVNGATR. A helical transmembrane segment spans residues 118 to 138; that stretch reads WIPLGPLNVQPSEFVKLFAIL. The Cytoplasmic segment spans residues 139–153; that stretch reads YVAGYLVRHADKVVN. A helical membrane pass occupies residues 154–174; sequence QLSGFIRPLILIGAAALLILM. The Periplasmic portion of the chain corresponds to 175–177; the sequence is QPD. 2 helical membrane-spanning segments follow: residues 178-198 and 199-219; these read FGTT…GGAS and LLPF…LVIF. At 220–281 the chain is on the periplasmic side; the sequence is SPYRLERVVS…PEAHTDFLPS (62 aa). The chain crosses the membrane as a helical span at residues 282-302; it reads VIGEELGLAGMLVLIAAFVFL. At 303–326 the chain is on the cytoplasmic side; the sequence is SWRAMSIGVRAEALKRPFESYVAQ. Residues 327 to 347 form a helical membrane-spanning segment; the sequence is GIGLWIGLQSFVNLGVNVGIL. Residues 348 to 353 lie on the Periplasmic side of the membrane; that stretch reads PTKGLT. A helical transmembrane segment spans residues 354 to 374; the sequence is LPFMSYGSNSLMVGCMAVAIL. Residues 375–399 are Cytoplasmic-facing; that stretch reads LRIDVMLRRVESEAKFKRGTPWSRA.

Belongs to the SEDS family. FtsW subfamily.

The protein localises to the cell inner membrane. It carries out the reaction [GlcNAc-(1-&gt;4)-Mur2Ac(oyl-L-Ala-gamma-D-Glu-L-Lys-D-Ala-D-Ala)](n)-di-trans,octa-cis-undecaprenyl diphosphate + beta-D-GlcNAc-(1-&gt;4)-Mur2Ac(oyl-L-Ala-gamma-D-Glu-L-Lys-D-Ala-D-Ala)-di-trans,octa-cis-undecaprenyl diphosphate = [GlcNAc-(1-&gt;4)-Mur2Ac(oyl-L-Ala-gamma-D-Glu-L-Lys-D-Ala-D-Ala)](n+1)-di-trans,octa-cis-undecaprenyl diphosphate + di-trans,octa-cis-undecaprenyl diphosphate + H(+). It functions in the pathway cell wall biogenesis; peptidoglycan biosynthesis. Its function is as follows. Peptidoglycan polymerase that is essential for cell division. The protein is Probable peptidoglycan glycosyltransferase FtsW of Allochromatium vinosum (strain ATCC 17899 / DSM 180 / NBRC 103801 / NCIMB 10441 / D) (Chromatium vinosum).